Here is a 387-residue protein sequence, read N- to C-terminus: 8-amino-7-oxononanoate synthase (387 aa).

Arginine 20 contacts substrate. 107–108 (GY) is a binding site for pyridoxal 5'-phosphate. Histidine 132 is a binding site for substrate. Residues serine 181, histidine 209, and threonine 238 each coordinate pyridoxal 5'-phosphate. Lysine 241 carries the N6-(pyridoxal phosphate)lysine modification. Threonine 355 contributes to the substrate binding site.

The protein belongs to the class-II pyridoxal-phosphate-dependent aminotransferase family. BioF subfamily. As to quaternary structure, homodimer. Pyridoxal 5'-phosphate serves as cofactor.

It carries out the reaction 6-carboxyhexanoyl-[ACP] + L-alanine + H(+) = (8S)-8-amino-7-oxononanoate + holo-[ACP] + CO2. It functions in the pathway cofactor biosynthesis; biotin biosynthesis. Functionally, catalyzes the decarboxylative condensation of pimeloyl-[acyl-carrier protein] and L-alanine to produce 8-amino-7-oxononanoate (AON), [acyl-carrier protein], and carbon dioxide. The chain is 8-amino-7-oxononanoate synthase from Dechloromonas aromatica (strain RCB).